Here is a 269-residue protein sequence, read N- to C-terminus: Sushi domain-containing protein 3 (269 aa).

A disordered region spans residues 1-23 (MRRTSATLRGRARPRWRAGNTTP). The Extracellular segment spans residues 1–103 (MRRTSATLRG…VPPHETFGFK (103 aa)). A Sushi domain is found at 30–93 (GTCAQLHPPP…WSSGSPVCKA (64 aa)). Cystine bridges form between Cys-32–Cys-75 and Cys-61–Cys-91. A helical membrane pass occupies residues 104–124 (VAVIASIVSCAIILLMSMAFL). Topologically, residues 125-269 (TCCLLKCVQK…PGRPKVYLPG (145 aa)) are cytoplasmic. The tract at residues 171-237 (NNSSSVGGGN…RMGTPGPGGC (67 aa)) is disordered. Over residues 176-190 (VGGGNGGPSGGGGKP) the composition is skewed to gly residues.

The protein resides in the cell membrane. This Mus musculus (Mouse) protein is Sushi domain-containing protein 3 (Susd3).